The following is a 207-amino-acid chain: Large ribosomal subunit protein uL4 (207 aa).

Positions 48–89 (THKVKNRSEVSGGGRKPWRQKGTGRARQGSIRSPQWRGGGTV) are disordered.

The protein belongs to the universal ribosomal protein uL4 family. As to quaternary structure, part of the 50S ribosomal subunit.

Functionally, one of the primary rRNA binding proteins, this protein initially binds near the 5'-end of the 23S rRNA. It is important during the early stages of 50S assembly. It makes multiple contacts with different domains of the 23S rRNA in the assembled 50S subunit and ribosome. Forms part of the polypeptide exit tunnel. The protein is Large ribosomal subunit protein uL4 of Bacillus cytotoxicus (strain DSM 22905 / CIP 110041 / 391-98 / NVH 391-98).